The primary structure comprises 299 residues: Regucalcin (299 aa).

Residue Glu-18 participates in a divalent metal cation binding. Residues Arg-101, Asn-103, and Glu-121 each coordinate substrate. Lys-144 carries the post-translational modification N6-succinyllysine. 2 residues coordinate a divalent metal cation: Asn-154 and Asp-204. Asp-204 acts as the Proton donor/acceptor in catalysis. N6-succinyllysine occurs at positions 244 and 253.

This sequence belongs to the SMP-30/CGR1 family. As to quaternary structure, monomer. The cofactor is Zn(2+). It depends on Mn(2+) as a cofactor. Requires Ca(2+) as cofactor. Mg(2+) is required as a cofactor.

Its subcellular location is the cytoplasm. It carries out the reaction D-glucono-1,5-lactone + H2O = D-gluconate + H(+). Gluconolactonase with low activity towards other sugar lactones, including gulonolactone and galactonolactone. Can also hydrolyze diisopropyl phosphorofluoridate and phenylacetate (in vitro). Calcium-binding protein. Modulates Ca(2+) signaling, and Ca(2+)-dependent cellular processes and enzyme activities. In Homo sapiens (Human), this protein is Regucalcin (RGN).